The sequence spans 1144 residues: Adenylate cyclase type 3 (1144 aa).

Over 1-79 (MTEDQGFSDP…FKRQRHETLL (79 aa)) the chain is Cytoplasmic. A run of 5 helical transmembrane segments spans residues 80–100 (VLVV…AVVF), 105–125 (LAPL…FVLC), 139–159 (VPYL…GLNF), 173–193 (AFFV…IVII), and 226–246 (ILAN…SYYM). Residues aspartate 324, isoleucine 325, and aspartate 368 each contribute to the Mg(2+) site. Residues 324–329 (DIVGFT) and 366–368 (LGD) contribute to the ATP site. Residues 381–401 (EDHAVCSILMGLAMVEAISYV) form a helical membrane-spanning segment. Residues 402–630 (REKTKTGVDM…RYSVEKEKQS (229 aa)) are Cytoplasmic-facing. Arginine 412 lines the ATP pocket. A Glycyl lysine isopeptide (Lys-Gly) (interchain with G-Cter in SUMO3) cross-link involves residue lysine 465. Residues 504-563 (QNGLNGSALPNGAPASKPSSPALIETKEPNGSAHASGSTSEEAEEQEAQADNPSFPNPRR) form a disordered region. A Phosphoserine modification is found at serine 523. The span at 534 to 543 (GSAHASGSTS) shows a compositional bias: low complexity. Phosphoserine is present on serine 578. The next 3 membrane-spanning stretches (helical) occupy residues 631–651 (GAAF…EILI), 662–682 (FVVG…AIFP), and 706–726 (WAML…LSCL). Asparagine 734 is a glycosylation site (N-linked (GlcNAc...) asparagine). A run of 3 helical transmembrane segments spans residues 755-775 (VAVL…MVKL), 777-797 (LMLL…CPVF), and 833-853 (LPLV…MLSF). Residues 854–1144 (YYFSRHVEKL…TLPHQVVDNP (291 aa)) lie on the Cytoplasmic side of the membrane. Residues lysine 975, 1062-1064 (DIW), and 1069-1073 (NVASR) contribute to the ATP site. Serine 1076 bears the Phosphoserine; by CaMK2 mark. Lysine 1109 provides a ligand contact to ATP.

It belongs to the adenylyl cyclase class-4/guanylyl cyclase family. Mg(2+) is required as a cofactor. Requires Mn(2+) as cofactor. In terms of processing, N-glycosylated. Post-translationally, sumoylated. Sumoylation is required for targeting ot olfactory cilia. Rapidly phosphorylated after stimulation by odorants or forskolin. Phosphorylation by CaMK2 at Ser-1076 down-regulates enzyme activity. As to expression, detected on cilia on the olfactory epithelium (at protein level). Detected on cilia on the olfactory epithelium.

Its subcellular location is the cell membrane. It localises to the golgi apparatus. The protein resides in the cell projection. It is found in the cilium. The protein localises to the cytoplasm. The enzyme catalyses ATP = 3',5'-cyclic AMP + diphosphate. With respect to regulation, specifically activated by the G alpha protein GNAL/G(olf) in signaling cascades triggered by odorant receptors. Activated by forskolin. After forskolin treatment, activity is further increased by calcium/calmodulin. In the absence of forskolin, calcium/calmodulin has little effect on enzyme activity. Its function is as follows. Catalyzes the formation of the signaling molecule cAMP in response to G-protein signaling. Participates in signaling cascades triggered by odorant receptors via its function in cAMP biosynthesis: specifically activated by G alpha protein GNAL/G(olf) in olfactory epithelium. Required for the perception of odorants. Required for normal sperm motility and normal male fertility. Plays a role in regulating insulin levels and body fat accumulation in response to a high fat diet. The chain is Adenylate cyclase type 3 from Rattus norvegicus (Rat).